Consider the following 332-residue polypeptide: Probable cytosolic iron-sulfur protein assembly protein 1 (332 aa).

WD repeat units follow at residues 9–48 (GHTD…LVTT), 52–93 (GHNR…WQFL), 98–137 (GHEN…DEFE), 144–183 (DHTQ…WICV), 188–230 (GHES…GGTG), 257–295 (AHTR…QWVV), and 302–332 (AHGV…IWEV).

Belongs to the WD repeat CIA1 family. As to quaternary structure, interacts with NAR1.

The protein resides in the cytoplasm. Its subcellular location is the nucleus. Essential component of the cytosolic iron-sulfur (Fe/S) protein assembly machinery. Required for the maturation of extramitochondrial Fe/S proteins. The chain is Probable cytosolic iron-sulfur protein assembly protein 1 from Yarrowia lipolytica (strain CLIB 122 / E 150) (Yeast).